Here is a 343-residue protein sequence, read N- to C-terminus: MSISNDSLASTVPGDELPSSYPVFSSDFSYIKPSHVLDVVTVTSTAGPEATDDPSYSGFYSTVISTQNPEPTSASTPPSASASSLPNGAQKHNHTGVIAGPIVGVLGGLIVLVIIFYCLRHFKRKKFLAEQQEFERQFEEEKSRLAAVRKNTEQEKMGYRGGYQMHSTPWASSPRNSTIPQRSQSFYNDTRRSSDLGANAADFVTPPGNVANSDNIRILKRNSIATIGNYRSPSALEKRRSISYGAVQSVQGRPLAPIPGRRPLSISSDLYNDSNSGSHSNDDSDETKLKQSSTESSSELLDEKDKFDKNSLNDPFVTIRKSSYEHEISEEHKKHSKKRSEHF.

The segment at 66-89 is disordered; it reads TQNPEPTSASTPPSASASSLPNGA. Positions 71-84 are enriched in low complexity; the sequence is PTSASTPPSASASS. The helical transmembrane segment at 96 to 116 threads the bilayer; it reads GVIAGPIVGVLGGLIVLVIIF. Disordered regions lie at residues 161-191 and 252-343; these read GGYQ…NDTR and GRPL…SEHF. Residues 165–188 show a composition bias toward polar residues; it reads MHSTPWASSPRNSTIPQRSQSFYN. The span at 280 to 289 shows a compositional bias: basic and acidic residues; it reads SNDDSDETKL. A compositionally biased stretch (low complexity) spans 290-299; it reads KQSSTESSSE. Composition is skewed to basic and acidic residues over residues 301 to 311 and 322 to 333; these read LDEKDKFDKNS and SSYEHEISEEHK. The span at 334 to 343 shows a compositional bias: basic residues; sequence KHSKKRSEHF.

Its subcellular location is the golgi apparatus membrane. This is an uncharacterized protein from Schizosaccharomyces pombe (strain 972 / ATCC 24843) (Fission yeast).